The primary structure comprises 490 residues: MTTLPVQQLYIHGQRVDATSGKTFRTVNPATGDVIAEVQVASQADVERAVQSAAEGQKVWAAMTAMERSRILRRAVEILRERNDELAHLETLDTGKALAETTTVDIVTGADVVEYYAGLATAIEGIQLPLRESSFFYTRREPLGVVAGIGAWNYPIQIAMWKSAPALAAGNAMVFKPSEVTPLTAIRLAEIYTEAGVPAGVFNVVQGPGREIGQWLTEHPVIEKISFTGGVATGKKVMASAASSSLKEVTMELGGKSPLVICDDADLDRAADIAVMANFFSSGQVCTNGTRVFVPRSMLAAFEAAVVERVKRIRIGDPMAAETNFGPLTSFPHMENVLRYIESGKAEGARLLTGGGRATEGALANGAYVLPTVFSDCRDDMTIVKEEIFGPVMSILAYDDEDEVVRRANDTTFGLAAGVVSKDVSRAHRIIHRLEAGICWINTWGESPAEMPVGGYKESGVGRENGLSTLGHYTRIKSVQVELGDYASVF.

Residues T26 and D93 each coordinate K(+). 150–152 is an NAD(+) binding site; it reads GAW. The Charge relay system role is filled by K162. 176 to 179 is a binding site for NAD(+); that stretch reads KPSE. Residue V180 participates in K(+) binding. 230 to 233 contributes to the NAD(+) binding site; it reads GVAT. Position 246 (L246) interacts with K(+). The Proton acceptor role is filled by E252. Residues G254, C286, and E387 each contribute to the NAD(+) site. The active-site Nucleophile is C286. At C286 the chain carries Cysteine sulfenic acid (-SOH). Residues K457 and G460 each coordinate K(+). Catalysis depends on E464, which acts as the Charge relay system.

It belongs to the aldehyde dehydrogenase family. Dimer of dimers. Requires K(+) as cofactor.

It carries out the reaction betaine aldehyde + NAD(+) + H2O = glycine betaine + NADH + 2 H(+). The protein operates within amine and polyamine biosynthesis; betaine biosynthesis via choline pathway; betaine from betaine aldehyde: step 1/1. Functionally, involved in the biosynthesis of the osmoprotectant glycine betaine. Catalyzes the irreversible oxidation of betaine aldehyde to the corresponding acid. This chain is Betaine aldehyde dehydrogenase, found in Stenotrophomonas maltophilia (strain R551-3).